The sequence spans 54 residues: Protein GndA (54 aa).

Residues 28-50 traverse the membrane as a helical segment; sequence LFVVIVSFQQRALTSSVPVFLAV.

It localises to the cell inner membrane. This chain is Protein GndA, found in Escherichia coli (strain K12).